The sequence spans 102 residues: Thioredoxin (102 aa).

Residues 1–102 (MVKIISSENF…FLTNLINKHA (102 aa)) enclose the Thioredoxin domain. Residues cysteine 28 and cysteine 31 are joined by a disulfide bond.

Belongs to the thioredoxin family.

Its function is as follows. Participates in various redox reactions through the reversible oxidation of its active center dithiol to a disulfide and catalyzes dithiol-disulfide exchange reactions. In Chlamydia pneumoniae (Chlamydophila pneumoniae), this protein is Thioredoxin (trxA).